Consider the following 637-residue polypeptide: Transcriptional activator of proteases prtT (637 aa).

The segment at residues 47–76 is a DNA-binding region (zn(2)-C6 fungal-type); the sequence is CHTCRKLKTRCDVDPRGHSCRRCLSLRLDC. Positions 127-145 are enriched in polar residues; the sequence is PSMPCSPTFQTRNHSIDGT. Residues 127–153 form a disordered region; that stretch reads PSMPCSPTFQTRNHSIDGTSSSDSMSS.

Belongs to the prtT family.

The protein localises to the nucleus. Functionally, transcription factor required for protein utilization and degradation. Regulates transcription of major secreted proteases. In Penicillium rubens (strain ATCC 28089 / DSM 1075 / NRRL 1951 / Wisconsin 54-1255) (Penicillium chrysogenum), this protein is Transcriptional activator of proteases prtT (prtT).